A 355-amino-acid polypeptide reads, in one-letter code: N-acetyl-gamma-glutamyl-phosphate reductase (355 aa).

The active site involves Cys-152.

Belongs to the NAGSA dehydrogenase family. Type 1 subfamily.

The protein resides in the cytoplasm. It catalyses the reaction N-acetyl-L-glutamate 5-semialdehyde + phosphate + NADP(+) = N-acetyl-L-glutamyl 5-phosphate + NADPH + H(+). It functions in the pathway amino-acid biosynthesis; L-arginine biosynthesis; N(2)-acetyl-L-ornithine from L-glutamate: step 3/4. Its function is as follows. Catalyzes the NADPH-dependent reduction of N-acetyl-5-glutamyl phosphate to yield N-acetyl-L-glutamate 5-semialdehyde. This Psychrobacter cryohalolentis (strain ATCC BAA-1226 / DSM 17306 / VKM B-2378 / K5) protein is N-acetyl-gamma-glutamyl-phosphate reductase.